A 191-amino-acid polypeptide reads, in one-letter code: ECF RNA polymerase sigma factor ShbA (191 aa).

The segment at 27 to 98 (LLAHVHPLAL…HKVADLQRAA (72 aa)) is sigma-70 factor domain-2. Positions 100–122 (RHPGSTAVPSDEMPERPDDSLGP) are disordered. Residues 112–122 (MPERPDDSLGP) show a composition bias toward basic and acidic residues. The tract at residues 138–187 (LLANLPENQRELLVLRVAVGLTAEETGQMLGMSPGAVRVAQHRALSRLRA) is sigma-70 factor domain-4. Positions 160–179 (AEETGQMLGMSPGAVRVAQH) form a DNA-binding region, H-T-H motif.

The protein belongs to the sigma-70 factor family. ECF subfamily.

Sigma factors are initiation factors that promote the attachment of RNA polymerase to specific initiation sites and are then released. Extracytoplasmic function (ECF) sigma factors are held in an inactive form by an anti-sigma factor until released. This alternative sigma factor governs the transcription of the principal sigma factor HrdB (SigA) throughout growth. Acts by binding to the promoter region. The sequence is that of ECF RNA polymerase sigma factor ShbA from Streptomyces griseus subsp. griseus (strain JCM 4626 / CBS 651.72 / NBRC 13350 / KCC S-0626 / ISP 5235).